The primary structure comprises 353 residues: Methionine import ATP-binding protein MetN (353 aa).

The region spanning 7-249 (LENIDVTFKQ…PKEELSRQFV (243 aa)) is the ABC transporter domain. 41–48 (GYSGAGKS) is a binding site for ATP.

Belongs to the ABC transporter superfamily. Methionine importer (TC 3.A.1.24) family. As to quaternary structure, the complex is composed of two ATP-binding proteins (MetN), two transmembrane proteins (MetI) and a solute-binding protein (MetQ).

It is found in the cell membrane. It catalyses the reaction L-methionine(out) + ATP + H2O = L-methionine(in) + ADP + phosphate + H(+). It carries out the reaction D-methionine(out) + ATP + H2O = D-methionine(in) + ADP + phosphate + H(+). Functionally, part of the ABC transporter complex MetNIQ involved in methionine import. Responsible for energy coupling to the transport system. This chain is Methionine import ATP-binding protein MetN, found in Ligilactobacillus salivarius (strain UCC118) (Lactobacillus salivarius).